The following is a 379-amino-acid chain: MTVMRKSHPILKIFNNSFIDLPTPSNISAWWNFGSLLGLCLIVQTLTGLFLAMHYTADISLAFSSVAHICRDVQYGWLIRNLHANGASMFFICLYLHIGRGLYYGSYLFKETWNIGVVLLLLVMAAAFVGYVLPWGQMSFWGATVITNLLSAIPYVGATLVEWVWGGFSVDNATLTRFFTFHFLLPFTIIALTMLHLLFLHETGSNNPTGLNSNPDKIPFHPYFSYKDLLGATLMITTLLTLVLFSPNLLGDPENFTPANPLITPPHIKPEWYFLFAYAILRSIPNKLGGVLALLFSILILMIVPLLHLSKQRSTTFRPFSQTLFWLLISNVLILTWIGGQPVEHPFIIIGQLASVTYFTLFLVVMPTTALLENKLLNW.

The next 4 helical transmembrane spans lie at 33–53 (FGSLLGLCLIVQTLTGLFLAM), 77–98 (WLIRNLHANGASMFFICLYLHI), 113–133 (WNIGVVLLLLVMAAAFVGYVL), and 178–198 (FFTFHFLLPFTIIALTMLHLL). Heme b-binding residues include H83 and H97. Residues H182 and H196 each coordinate heme b. H201 serves as a coordination point for a ubiquinone. Transmembrane regions (helical) follow at residues 226–246 (YKDLLGATLMITTLLTLVLFS), 288–308 (LGGVLALLFSILILMIVPLLH), 320–340 (FSQTLFWLLISNVLILTWIGG), and 347–367 (FIIIGQLASVTYFTLFLVVMP).

The protein belongs to the cytochrome b family. As to quaternary structure, the cytochrome bc1 complex contains 3 respiratory subunits (MT-CYB, CYC1 and UQCRFS1), 2 core proteins (UQCRC1 and UQCRC2) and probably 6 low-molecular weight proteins. It depends on heme b as a cofactor.

The protein localises to the mitochondrion inner membrane. Functionally, component of the ubiquinol-cytochrome c reductase complex (complex III or cytochrome b-c1 complex) that is part of the mitochondrial respiratory chain. The b-c1 complex mediates electron transfer from ubiquinol to cytochrome c. Contributes to the generation of a proton gradient across the mitochondrial membrane that is then used for ATP synthesis. The sequence is that of Cytochrome b (MT-CYB) from Iguana iguana (Common iguana).